Consider the following 336-residue polypeptide: 7,8-didemethyl-8-hydroxy-5-deazariboflavin synthase (336 aa).

Residues 18-249 (ITYSPAYTLV…TSIAIQVPPN (232 aa)) form the Radical SAM core domain. Residues cysteine 32, cysteine 36, and cysteine 39 each contribute to the [4Fe-4S] cluster site.

Belongs to the radical SAM superfamily. CofG family. In terms of assembly, consists of two subunits, CofG and CofH. The cofactor is [4Fe-4S] cluster.

The enzyme catalyses 5-amino-5-(4-hydroxybenzyl)-6-(D-ribitylimino)-5,6-dihydrouracil + S-adenosyl-L-methionine = 7,8-didemethyl-8-hydroxy-5-deazariboflavin + 5'-deoxyadenosine + L-methionine + NH4(+) + H(+). It functions in the pathway cofactor biosynthesis; coenzyme F0 biosynthesis. In terms of biological role, catalyzes the radical-mediated synthesis of 7,8-didemethyl-8-hydroxy-5-deazariboflavin from 5-amino-5-(4-hydroxybenzyl)-6-(D-ribitylimino)-5,6-dihydrouracil. The protein is 7,8-didemethyl-8-hydroxy-5-deazariboflavin synthase of Synechococcus elongatus (strain ATCC 33912 / PCC 7942 / FACHB-805) (Anacystis nidulans R2).